A 380-amino-acid polypeptide reads, in one-letter code: Aminomethyltransferase (380 aa).

The protein belongs to the GcvT family. The glycine cleavage system is composed of four proteins: P, T, L and H.

It catalyses the reaction N(6)-[(R)-S(8)-aminomethyldihydrolipoyl]-L-lysyl-[protein] + (6S)-5,6,7,8-tetrahydrofolate = N(6)-[(R)-dihydrolipoyl]-L-lysyl-[protein] + (6R)-5,10-methylene-5,6,7,8-tetrahydrofolate + NH4(+). Functionally, the glycine cleavage system catalyzes the degradation of glycine. The polypeptide is Aminomethyltransferase (Koribacter versatilis (strain Ellin345)).